The primary structure comprises 889 residues: Protein translocase subunit SecA (889 aa).

Residues glutamine 87, 105–109 (GEGKT), and aspartate 494 each bind ATP. A disordered region spans residues 823–889 (ESLRPEEADL…RMDKDTKGKR (67 aa)). Residues 867-889 (PRDDRPMNREERRRMDKDTKGKR) are compositionally biased toward basic and acidic residues.

It belongs to the SecA family. In terms of assembly, monomer and homodimer. Part of the essential Sec protein translocation apparatus which comprises SecA, SecYEG and auxiliary proteins SecDF-YajC and YidC.

It is found in the cell inner membrane. Its subcellular location is the cytoplasm. The enzyme catalyses ATP + H2O + cellular proteinSide 1 = ADP + phosphate + cellular proteinSide 2.. Its function is as follows. Part of the Sec protein translocase complex. Interacts with the SecYEG preprotein conducting channel. Has a central role in coupling the hydrolysis of ATP to the transfer of proteins into and across the cell membrane, serving as an ATP-driven molecular motor driving the stepwise translocation of polypeptide chains across the membrane. The chain is Protein translocase subunit SecA from Bdellovibrio bacteriovorus (strain ATCC 15356 / DSM 50701 / NCIMB 9529 / HD100).